The chain runs to 243 residues: UPF0758 protein MAE_44350 (243 aa).

Residues 113 to 235 (VIDSPDTAAA…FQSLRQITDL (123 aa)) form the MPN domain. 3 residues coordinate Zn(2+): His184, His186, and Asp197. The JAMM motif signature appears at 184-197 (HNHPTGSLVPSQDD).

The protein belongs to the UPF0758 family.

The polypeptide is UPF0758 protein MAE_44350 (Microcystis aeruginosa (strain NIES-843 / IAM M-2473)).